The sequence spans 154 residues: MNTYEGKLQSKNSKIAIIISRFNSFINKNLLDGAIDSLKRIGRLKSENISIFWVPGVCEIPIIVNFLSKQNKYNGLITLGTVIQGKTFHHELISKDFNNIIFNISIKKNIPISVGVLYTRNINQAIERSGTKLGNKGSDAALSVLEMINLLKII.

5-amino-6-(D-ribitylamino)uracil contacts are provided by residues Phe22, 57-59 (VCE), and 81-83 (TVI). 86 to 87 (KT) contacts (2S)-2-hydroxy-3-oxobutyl phosphate. His89 functions as the Proton donor in the catalytic mechanism. Residue Val114 coordinates 5-amino-6-(D-ribitylamino)uracil. Residue Arg128 participates in (2S)-2-hydroxy-3-oxobutyl phosphate binding.

It belongs to the DMRL synthase family. Forms an icosahedral capsid composed of 60 subunits, arranged as a dodecamer of pentamers.

It catalyses the reaction (2S)-2-hydroxy-3-oxobutyl phosphate + 5-amino-6-(D-ribitylamino)uracil = 6,7-dimethyl-8-(1-D-ribityl)lumazine + phosphate + 2 H2O + H(+). Its pathway is cofactor biosynthesis; riboflavin biosynthesis; riboflavin from 2-hydroxy-3-oxobutyl phosphate and 5-amino-6-(D-ribitylamino)uracil: step 1/2. In terms of biological role, catalyzes the formation of 6,7-dimethyl-8-ribityllumazine by condensation of 5-amino-6-(D-ribitylamino)uracil with 3,4-dihydroxy-2-butanone 4-phosphate. This is the penultimate step in the biosynthesis of riboflavin. This Wigglesworthia glossinidia brevipalpis protein is 6,7-dimethyl-8-ribityllumazine synthase.